The sequence spans 228 residues: Probable octanoyltransferase (228 aa).

The BPL/LPL catalytic domain maps to 27–198 (SGGDDAFILV…AFEEVFEAKV (172 aa)). Residues 65-72 (RGGDATYH), 129-131 (SIG), and 142-144 (GVA) contribute to the substrate site. The active-site Acyl-thioester intermediate is the cysteine 160.

It belongs to the LipB family.

It is found in the cytoplasm. The enzyme catalyses octanoyl-[ACP] + L-lysyl-[protein] = N(6)-octanoyl-L-lysyl-[protein] + holo-[ACP] + H(+). The protein operates within protein modification; protein lipoylation via endogenous pathway; protein N(6)-(lipoyl)lysine from octanoyl-[acyl-carrier-protein]: step 1/2. Functionally, catalyzes the transfer of endogenously produced octanoic acid from octanoyl-acyl-carrier-protein onto the lipoyl domains of lipoate-dependent enzymes. Lipoyl-ACP can also act as a substrate although octanoyl-ACP is likely to be the physiological substrate. The chain is Probable octanoyltransferase from Pyrobaculum calidifontis (strain DSM 21063 / JCM 11548 / VA1).